The primary structure comprises 404 residues: Multidrug resistance protein MdtG (404 aa).

The next 11 helical transmembrane spans lie at 19-39 (LGCF…PLYV), 56-76 (LVFS…GGLA), 90-110 (LGMA…QFLI), 113-133 (ALLG…ATQV), 149-169 (GVSG…HYGL), 171-191 (PVFF…FFFI), 222-242 (LFVT…ILTL), 254-274 (IAFI…LSAP), 288-308 (ILIV…FVQT), 317-337 (FLLG…LVYN), and 376-396 (AVFC…WNSL).

It belongs to the major facilitator superfamily. DHA1 family. MdtG (TC 2.A.1.2.20) subfamily.

Its subcellular location is the cell inner membrane. This is Multidrug resistance protein MdtG from Salmonella paratyphi C (strain RKS4594).